The following is a 216-amino-acid chain: Redox-sensing transcriptional repressor Rex 1 (216 aa).

The H-T-H motif DNA-binding region spans Leu-16–Phe-55. Position 90–95 (Gly-90–Gly-95) interacts with NAD(+).

Belongs to the transcriptional regulatory Rex family. In terms of assembly, homodimer.

The protein resides in the cytoplasm. In terms of biological role, modulates transcription in response to changes in cellular NADH/NAD(+) redox state. This Enterococcus faecalis (strain ATCC 700802 / V583) protein is Redox-sensing transcriptional repressor Rex 1.